A 213-amino-acid chain; its full sequence is Probable septum site-determining protein MinC (213 aa).

It belongs to the MinC family. Interacts with MinD and FtsZ.

Its function is as follows. Cell division inhibitor that blocks the formation of polar Z ring septums. Rapidly oscillates between the poles of the cell to destabilize FtsZ filaments that have formed before they mature into polar Z rings. Prevents FtsZ polymerization. The polypeptide is Probable septum site-determining protein MinC (Clostridium botulinum (strain Eklund 17B / Type B)).